The primary structure comprises 1045 residues: Pre-mRNA-splicing factor ATP-dependent RNA helicase DHX16 (1045 aa).

Residues 101-211 form a disordered region; it reads EDSEESSEEA…ERSDKKAYEE (111 aa). Residues Ser103, Ser106, and Ser107 each carry the phosphoserine modification. Residues 119 to 131 show a composition bias toward basic residues; sequence QKKRKKRKHLRKK. The span at 135 to 144 shows a compositional bias: acidic residues; it reads EEEEEEEEEV. Ser164 bears the Phosphoserine mark. Basic and acidic residues predominate over residues 170-211; the sequence is RTERERLQDLEERDAFAERVRQRDKDRTRNVLERSDKKAYEE. Residues 413 to 577 form the Helicase ATP-binding domain; it reads LAAVANHQIL…FDDAPVFRIP (165 aa). 426 to 433 lines the ATP pocket; that stretch reads GETGSGKT. The short motif at 524–527 is the DEAH box element; sequence DEAH. In terms of domain architecture, Helicase C-terminal spans 602-775; sequence SVLQIHVTQP…NVVLLLKSLG (174 aa). Thr716 carries the phosphothreonine modification. Residues 1026–1045 are disordered; it reads EDPHAKKMPKKTGKTREELG.

Belongs to the DEAD box helicase family. DEAH subfamily. DDX16/PRP8 sub-subfamily. As to quaternary structure, component of pre-catalytic spliceosome complexes. Component of the minor spliceosome, which splices U12-type introns. Interacts with GPKOW. Interacts with TRIM6. Interacts with RIGI.

It localises to the nucleus. The protein resides in the nucleoplasm. The protein localises to the cytoplasm. It catalyses the reaction ATP + H2O = ADP + phosphate + H(+). Functionally, required for pre-mRNA splicing as a component of the spliceosome. Contributes to pre-mRNA splicing after spliceosome formation and prior to the first transesterification reaction. As a component of the minor spliceosome, involved in the splicing of U12-type introns in pre-mRNAs. Also plays a role in innate antiviral response by acting as a pattern recognition receptor sensing splicing signals in viral RNA. Mechanistically, TRIM6 promotes the interaction between unanchored 'Lys-48'-polyubiquitin chains and DHX16, leading to DHX16 interaction with RIGI and ssRNA to amplify RIGI-dependent innate antiviral immune responses. This chain is Pre-mRNA-splicing factor ATP-dependent RNA helicase DHX16 (DHX16), found in Sus scrofa (Pig).